The primary structure comprises 394 residues: Cobalt-precorrin-5B C(1)-methyltransferase (394 aa).

This sequence belongs to the CbiD family.

It carries out the reaction Co-precorrin-5B + S-adenosyl-L-methionine = Co-precorrin-6A + S-adenosyl-L-homocysteine. The protein operates within cofactor biosynthesis; adenosylcobalamin biosynthesis; cob(II)yrinate a,c-diamide from sirohydrochlorin (anaerobic route): step 6/10. Functionally, catalyzes the methylation of C-1 in cobalt-precorrin-5B to form cobalt-precorrin-6A. The chain is Cobalt-precorrin-5B C(1)-methyltransferase from Clostridium beijerinckii (strain ATCC 51743 / NCIMB 8052) (Clostridium acetobutylicum).